The sequence spans 168 residues: Peptidoglycan-associated lipoprotein (168 aa).

Residues 1–24 (MGRIAALTRNPVMIALVAMLAIAG) form the signal peptide. Cysteine 25 is lipidated: N-palmitoyl cysteine. The S-diacylglycerol cysteine moiety is linked to residue cysteine 25. The 118-residue stretch at 50–167 (AQDFTVNIGD…RAVTTLSGAG (118 aa)) folds into the OmpA-like domain.

It belongs to the Pal lipoprotein family. The Tol-Pal system is composed of five core proteins: the inner membrane proteins TolA, TolQ and TolR, the periplasmic protein TolB and the outer membrane protein Pal. They form a network linking the inner and outer membranes and the peptidoglycan layer.

The protein resides in the cell outer membrane. In terms of biological role, part of the Tol-Pal system, which plays a role in outer membrane invagination during cell division and is important for maintaining outer membrane integrity. The protein is Peptidoglycan-associated lipoprotein of Mesorhizobium japonicum (strain LMG 29417 / CECT 9101 / MAFF 303099) (Mesorhizobium loti (strain MAFF 303099)).